A 285-amino-acid polypeptide reads, in one-letter code: Acetylglutamate kinase (285 aa).

Substrate is bound by residues 55 to 56 (GG), arginine 77, and asparagine 171.

This sequence belongs to the acetylglutamate kinase family. ArgB subfamily.

The protein localises to the cytoplasm. It carries out the reaction N-acetyl-L-glutamate + ATP = N-acetyl-L-glutamyl 5-phosphate + ADP. It participates in amino-acid biosynthesis; L-arginine biosynthesis; N(2)-acetyl-L-ornithine from L-glutamate: step 2/4. Functionally, catalyzes the ATP-dependent phosphorylation of N-acetyl-L-glutamate. This Chlorobaculum tepidum (strain ATCC 49652 / DSM 12025 / NBRC 103806 / TLS) (Chlorobium tepidum) protein is Acetylglutamate kinase.